Consider the following 353-residue polypeptide: 3-isopropylmalate dehydrogenase (353 aa).

75–88 (GPKWENLPHEHKPE) is a binding site for NAD(+). Substrate-binding residues include R95, R105, R133, and D219. Mg(2+) is bound by residues D219, D243, and D247. 276 to 288 (GSAPDIAGKNIAN) provides a ligand contact to NAD(+).

It belongs to the isocitrate and isopropylmalate dehydrogenases family. LeuB type 1 subfamily. As to quaternary structure, homodimer. The cofactor is Mg(2+). It depends on Mn(2+) as a cofactor.

It is found in the cytoplasm. The enzyme catalyses (2R,3S)-3-isopropylmalate + NAD(+) = 4-methyl-2-oxopentanoate + CO2 + NADH. It functions in the pathway amino-acid biosynthesis; L-leucine biosynthesis; L-leucine from 3-methyl-2-oxobutanoate: step 3/4. In terms of biological role, catalyzes the oxidation of 3-carboxy-2-hydroxy-4-methylpentanoate (3-isopropylmalate) to 3-carboxy-4-methyl-2-oxopentanoate. The product decarboxylates to 4-methyl-2 oxopentanoate. In Chlorobium luteolum (strain DSM 273 / BCRC 81028 / 2530) (Pelodictyon luteolum), this protein is 3-isopropylmalate dehydrogenase.